The primary structure comprises 622 residues: Low affinity potassium transport system protein Kup (622 aa).

The next 12 helical transmembrane spans lie at 9–29 (LPAITLAAIGVVYGDIGTSPL), 49–69 (VFGFLSLIFWLLIFVVSIKYL), 103–123 (VIMGLIGGSFFYGEVVITPAI), 137–157 (PQLDTWIVPLSIVVLTLLFMI), 165–185 (VGKLFAPIMLTWFLILAVLGL), 213–233 (VSFIALGAVVLSITGVEALYA), 247–267 (WFTVVLPSLVLNYFGQGALLL), 276–296 (PFFLLAPDWALIPLLILAALA), 337–357 (IYIPFVNWLLYFAVVVVIVSF), 363–383 (LAAAYGIAVTGTMVLTSILST), 396–416 (LVALILVAFLCVDIPLFSANL), and 419–439 (LLSGGWLPLSLGLIMFTIMTT).

Belongs to the HAK/KUP transporter (TC 2.A.72) family.

Its subcellular location is the cell inner membrane. The catalysed reaction is K(+)(in) + H(+)(in) = K(+)(out) + H(+)(out). Its function is as follows. Responsible for the low-affinity transport of potassium into the cell. Likely operates as a K(+):H(+) symporter. The sequence is that of Low affinity potassium transport system protein Kup from Salmonella arizonae (strain ATCC BAA-731 / CDC346-86 / RSK2980).